Reading from the N-terminus, the 264-residue chain is General transcription factor IIF subunit 2 (264 aa).

This sequence belongs to the TFIIF beta subunit family. In terms of assembly, heterodimer of an alpha and a beta subunit.

The protein localises to the nucleus. Functionally, TFIIF is a general transcription initiation factor that binds to RNA polymerase II and helps to recruit it to the initiation complex in collaboration with TFIIB. This chain is General transcription factor IIF subunit 2 (gtf2f2), found in Xenopus laevis (African clawed frog).